The primary structure comprises 360 residues: Protein RecA (360 aa).

65–72 (GPESSGKT) is an ATP binding site.

This sequence belongs to the RecA family.

Its subcellular location is the cytoplasm. Functionally, can catalyze the hydrolysis of ATP in the presence of single-stranded DNA, the ATP-dependent uptake of single-stranded DNA by duplex DNA, and the ATP-dependent hybridization of homologous single-stranded DNAs. It interacts with LexA causing its activation and leading to its autocatalytic cleavage. The polypeptide is Protein RecA (Tolumonas auensis (strain DSM 9187 / NBRC 110442 / TA 4)).